Here is a 273-residue protein sequence, read N- to C-terminus: Bis(5'-nucleosyl)-tetraphosphatase, symmetrical (273 aa).

It belongs to the Ap4A hydrolase family.

The catalysed reaction is P(1),P(4)-bis(5'-adenosyl) tetraphosphate + H2O = 2 ADP + 2 H(+). In terms of biological role, hydrolyzes diadenosine 5',5'''-P1,P4-tetraphosphate to yield ADP. The protein is Bis(5'-nucleosyl)-tetraphosphatase, symmetrical of Aeromonas hydrophila subsp. hydrophila (strain ATCC 7966 / DSM 30187 / BCRC 13018 / CCUG 14551 / JCM 1027 / KCTC 2358 / NCIMB 9240 / NCTC 8049).